The following is a 320-amino-acid chain: Putative cyclin-D7-1 (320 aa).

A disordered region spans residues 1-46 (MDDDDDTSFNNSLDLYCDEDPFDSTPPPPPPPPEQQQQAGTTTPDD). Positions 24 to 34 (STPPPPPPPPE) are enriched in pro residues. Residues 35 to 44 (QQQQAGTTTP) show a composition bias toward low complexity.

It belongs to the cyclin family. Cyclin D subfamily.

This is Putative cyclin-D7-1 (CYCD7-1) from Oryza sativa subsp. japonica (Rice).